The chain runs to 609 residues: Probable translation initiation factor IF-2 (609 aa).

Residues 12 to 230 (LRQPIVAVLG…VLAGLAQRYM (219 aa)) form the tr-type G domain. Residues 21 to 28 (GHVDHGKT) form a G1 region. 21–28 (GHVDHGKT) is a GTP binding site. The tract at residues 46 to 50 (QITQH) is G2. A G3 region spans residues 86 to 89 (DTPG). GTP contacts are provided by residues 86-90 (DTPGH) and 140-143 (NKID). Positions 140–143 (NKID) are G4. The G5 stretch occupies residues 208–210 (SAK).

Belongs to the TRAFAC class translation factor GTPase superfamily. Classic translation factor GTPase family. IF-2 subfamily.

In terms of biological role, function in general translation initiation by promoting the binding of the formylmethionine-tRNA to ribosomes. Seems to function along with eIF-2. The chain is Probable translation initiation factor IF-2 from Ignicoccus hospitalis (strain KIN4/I / DSM 18386 / JCM 14125).